The sequence spans 551 residues: MKSAPFLFLLGLLGLVTAQTQDPALLDLLRENPDLLSLLLQSNEHRAPLVKPNVVLLVADHMGSGDLTSYGHPTQEAGFIDKMAAEGLRFTNGYVGDAVCTPSRSAIMTGRLPVRIGTFGETRVFLPWTKTGLPKSELTIAEAMKEAGYATGMVGKWHLGINENSSTDGAHLPFNHGFDFVGHNLPFTNSWSCDDTGLHKDFPDSQRCYLYVNATLVSQPYQHKGLTQLFTDDALGFIEDNHADPFFLYVAFAHMHTSLFSSDDFSCTSRRGRYGDNLLEMHDAVQKIVDKLEENNISENTIIFFISDHGPHREYCEEGGDASIFRGGKSHSWEGGHRIPYIVYWPGTISPGISNEIVTSMDIIATAADLGGTTLPTDRIYDGKSIKDVLLEGSASPHSSFFYYCKDNLMAVRVGKYKAHFRTQRVRSQDEYGLECAGGFPLEDYFDCNDCEGDCVTEHDPPLLFDLHRDPGEAYPLEACGHEDVFLTVKSTVEEHKAALVKGTPLLDSFDHSIVPCCNPANGCICNYVHEPGMPECYQDQVATAARHYRP.

The first 20 residues, 1–20 (MKSAPFLFLLGLLGLVTAQT), serve as a signal peptide directing secretion. A Blocked amino end (Gln) modification is found at Gln21. 3 residues coordinate Ca(2+): Asp60, His61, and Cys100. Cys100 acts as the Nucleophile in catalysis. 3-oxoalanine (Cys) is present on Cys100. His158 is a catalytic residue. N-linked (GlcNAc...) asparagine glycosylation is found at Asn164, Asn213, and Asn296. Residues Asp308 and His309 each coordinate Ca(2+).

The protein belongs to the sulfatase family. It depends on Ca(2+) as a cofactor. The conversion to 3-oxoalanine (also known as C-formylglycine, FGly), of a serine or cysteine residue in prokaryotes and of a cysteine residue in eukaryotes, is critical for catalytic activity.

It localises to the cytoplasm. The protein resides in the secreted. It is found in the extracellular space. The protein localises to the extracellular matrix. The catalysed reaction is an aryl sulfate + H2O = a phenol + sulfate + H(+). May be a structural component of the extracellular matrices involved in cell movement during morphogenesis. In Hemicentrotus pulcherrimus (Sea urchin), this protein is Arylsulfatase.